The sequence spans 219 residues: Ribose-5-phosphate isomerase A (219 aa).

Substrate is bound by residues threonine 28–threonine 31, aspartate 81–aspartate 84, and lysine 94–glycine 97. Glutamate 103 (proton acceptor) is an active-site residue. Lysine 121 is a binding site for substrate.

It belongs to the ribose 5-phosphate isomerase family. As to quaternary structure, homodimer.

It catalyses the reaction aldehydo-D-ribose 5-phosphate = D-ribulose 5-phosphate. It participates in carbohydrate degradation; pentose phosphate pathway; D-ribose 5-phosphate from D-ribulose 5-phosphate (non-oxidative stage): step 1/1. Catalyzes the reversible conversion of ribose-5-phosphate to ribulose 5-phosphate. In Shewanella sp. (strain ANA-3), this protein is Ribose-5-phosphate isomerase A.